The following is a 277-amino-acid chain: Undecaprenyl-diphosphatase 2 (277 aa).

A run of 6 helical transmembrane segments spans residues 43–63, 87–107, 109–129, 183–203, 214–234, and 254–274; these read RAMA…VWEF, LLIA…TIHE, LFNP…MLWA, AATE…AVYS, SDLP…MIAV, and IAFG…WTAA.

It belongs to the UppP family.

It localises to the cell inner membrane. It carries out the reaction di-trans,octa-cis-undecaprenyl diphosphate + H2O = di-trans,octa-cis-undecaprenyl phosphate + phosphate + H(+). In terms of biological role, catalyzes the dephosphorylation of undecaprenyl diphosphate (UPP). Confers resistance to bacitracin. The polypeptide is Undecaprenyl-diphosphatase 2 (Pseudomonas fluorescens (strain Pf0-1)).